A 121-amino-acid polypeptide reads, in one-letter code: Parathyroid hormone-related protein (121 aa).

An N-terminal signal peptide occupies residues 1–14 (VGVFLLSYSVPSCG). Positions 15 to 24 (RSVEELGRRL) are excised as a propeptide. The interval 47-58 (RFFLHHLIAEIH) is important for receptor binding. Residues 61–121 (EIRATSEVSP…PGKKKKGKPG (61 aa)) are disordered. Residues 66-80 (SEVSPNSKPAPNTKN) show a composition bias toward polar residues. Residues 98–119 (TNKVETYKEQPLKTPGKKKKGK) carry the Nuclear localization signal motif. Positions 99–108 (NKVETYKEQP) are enriched in basic and acidic residues. Residues 112–121 (PGKKKKGKPG) show a composition bias toward basic residues.

Belongs to the parathyroid hormone family. In terms of assembly, PTHrP interacts with PTH1R (via N-terminal extracellular domain).

The protein localises to the secreted. Its subcellular location is the cytoplasm. It localises to the nucleus. Neuroendocrine peptide which is a critical regulator of cellular and organ growth, development, migration, differentiation and survival and of epithelial calcium ion transport. Acts by binding to its receptor, PTH1R, activating G protein-coupled receptor signaling. Regulates endochondral bone development and epithelial-mesenchymal interactions during the formation of the mammary glands and teeth. Required for skeletal homeostasis. Promotes mammary mesenchyme differentiation and bud outgrowth by modulating mesenchymal cell responsiveness to BMPs. Up-regulates BMPR1A expression in the mammary mesenchyme and this increases the sensitivity of these cells to BMPs and allows them to respond to BMP4 in a paracrine and/or autocrine fashion. BMP4 signaling in the mesenchyme, in turn, triggers epithelial outgrowth and augments MSX2 expression, which causes the mammary mesenchyme to inhibit hair follicle formation within the nipple sheath. The sequence is that of Parathyroid hormone-related protein (PTHLH) from Ovis aries (Sheep).